We begin with the raw amino-acid sequence, 140 residues long: Nucleoside diphosphate kinase (140 aa).

Residues Lys-11, Phe-59, Arg-87, Thr-93, Arg-104, and Asn-114 each coordinate ATP. His-117 functions as the Pros-phosphohistidine intermediate in the catalytic mechanism.

It belongs to the NDK family. As to quaternary structure, homotetramer. It depends on Mg(2+) as a cofactor.

The protein localises to the cytoplasm. The enzyme catalyses a 2'-deoxyribonucleoside 5'-diphosphate + ATP = a 2'-deoxyribonucleoside 5'-triphosphate + ADP. It catalyses the reaction a ribonucleoside 5'-diphosphate + ATP = a ribonucleoside 5'-triphosphate + ADP. Functionally, major role in the synthesis of nucleoside triphosphates other than ATP. The ATP gamma phosphate is transferred to the NDP beta phosphate via a ping-pong mechanism, using a phosphorylated active-site intermediate. This Maricaulis maris (strain MCS10) (Caulobacter maris) protein is Nucleoside diphosphate kinase.